Consider the following 244-residue polypeptide: tRNA pseudouridine synthase A (244 aa).

The Nucleophile role is filled by D52. Y110 serves as a coordination point for substrate.

This sequence belongs to the tRNA pseudouridine synthase TruA family. Homodimer.

It carries out the reaction uridine(38/39/40) in tRNA = pseudouridine(38/39/40) in tRNA. In terms of biological role, formation of pseudouridine at positions 38, 39 and 40 in the anticodon stem and loop of transfer RNAs. The chain is tRNA pseudouridine synthase A from Geotalea uraniireducens (strain Rf4) (Geobacter uraniireducens).